The primary structure comprises 203 residues: Large ribosomal subunit protein bL25 (203 aa).

This sequence belongs to the bacterial ribosomal protein bL25 family. CTC subfamily. Part of the 50S ribosomal subunit; part of the 5S rRNA/L5/L18/L25 subcomplex. Contacts the 5S rRNA. Binds to the 5S rRNA independently of L5 and L18.

This is one of the proteins that binds to the 5S RNA in the ribosome where it forms part of the central protuberance. The chain is Large ribosomal subunit protein bL25 from Cereibacter sphaeroides (strain ATCC 17029 / ATH 2.4.9) (Rhodobacter sphaeroides).